A 193-amino-acid chain; its full sequence is Surfactant protein C (193 aa).

Positions 1–23 (MDMSSKEVLMESPPDYSAGPRSQ) are excised as a propeptide. 2 S-palmitoyl cysteine lipidation sites follow: Cys-28 and Cys-29. The propeptide occupies 59 to 193 (HMSQKHTEMV…LCGELPLYYI (135 aa)). In terms of domain architecture, BRICHOS spans 94-193 (FSIGSTGIVV…LCGELPLYYI (100 aa)). The cysteines at positions 121 and 185 are disulfide-linked. The disordered stretch occupies residues 147-170 (KPSTPTSKLGQEEGHDTGSESDSS).

The protein resides in the secreted. It localises to the extracellular space. The protein localises to the surface film. In terms of biological role, pulmonary surfactant associated proteins promote alveolar stability by lowering the surface tension at the air-liquid interface in the peripheral air spaces. This chain is Surfactant protein C, found in Mus musculus (Mouse).